The primary structure comprises 804 residues: Phenylalanine--tRNA ligase beta subunit (804 aa).

Residues 39–147 (GEGLDSVVTA…PDCEPGQPVF (109 aa)) form the tRNA-binding domain. The region spanning 401–480 (LAERKVTLAV…RLNGYDNIPV (80 aa)) is the B5 domain. The Mg(2+) site is built by Asp458, Asp464, Glu467, and Glu468. In terms of domain architecture, FDX-ACB spans 711 to 804 (SRFPQVARDS…LIAKLGAEIR (94 aa)).

This sequence belongs to the phenylalanyl-tRNA synthetase beta subunit family. Type 1 subfamily. In terms of assembly, tetramer of two alpha and two beta subunits. Mg(2+) serves as cofactor.

The protein localises to the cytoplasm. It carries out the reaction tRNA(Phe) + L-phenylalanine + ATP = L-phenylalanyl-tRNA(Phe) + AMP + diphosphate + H(+). This is Phenylalanine--tRNA ligase beta subunit from Syntrophotalea carbinolica (strain DSM 2380 / NBRC 103641 / GraBd1) (Pelobacter carbinolicus).